Consider the following 256-residue polypeptide: Pimeloyl-[acyl-carrier protein] methyl ester esterase (256 aa).

The AB hydrolase-1 domain occupies 15-242; that stretch reads HLVLLHGWGL…AAHAPFISHP (228 aa). Substrate contacts are provided by residues tryptophan 22, 82 to 83, and 143 to 147; these read SL and FLALQ. Serine 82 functions as the Nucleophile in the catalytic mechanism. Active-site residues include aspartate 207 and histidine 235. Histidine 235 is a substrate binding site.

Belongs to the AB hydrolase superfamily. Carboxylesterase BioH family. In terms of assembly, monomer.

It is found in the cytoplasm. The enzyme catalyses 6-carboxyhexanoyl-[ACP] methyl ester + H2O = 6-carboxyhexanoyl-[ACP] + methanol + H(+). It participates in cofactor biosynthesis; biotin biosynthesis. In terms of biological role, the physiological role of BioH is to remove the methyl group introduced by BioC when the pimeloyl moiety is complete. It allows to synthesize pimeloyl-ACP via the fatty acid synthetic pathway through the hydrolysis of the ester bonds of pimeloyl-ACP esters. This is Pimeloyl-[acyl-carrier protein] methyl ester esterase from Escherichia coli O6:H1 (strain CFT073 / ATCC 700928 / UPEC).